The following is a 90-amino-acid chain: Small ribosomal subunit protein bS20 (90 aa).

This sequence belongs to the bacterial ribosomal protein bS20 family.

Its function is as follows. Binds directly to 16S ribosomal RNA. In Fusobacterium nucleatum subsp. nucleatum (strain ATCC 25586 / DSM 15643 / BCRC 10681 / CIP 101130 / JCM 8532 / KCTC 2640 / LMG 13131 / VPI 4355), this protein is Small ribosomal subunit protein bS20.